The sequence spans 509 residues: MNLINLILYFILFWIVFDFIRKNRRISFNDPPSPWALPIIGHLHKLSLNPHRSLTELAKVYGGVYSLHIGDSKTVVITDVSAFKDVTIKQFKNFANRPQPKSIRVITNFKGLAFADYDQWQKTRKLVSSALTKTKIKTFNNLIEKQTENLIESMNEFSNKNELFHPRKYLTKYSLNIILSMLFSKEIGKNESINKGTMERLTIPFNEAFKKVGKVDDFLWFLSPFFYFSNKQYKKYIFDIYYFMEEIYDQHLLDLDYNEPKDLLDQLIIASQGREKETVILVGMDFLLAGSDTQKATQEWFCLYLINNPDVQKKAYQELISVVGKDCKFVTSNHIENCPYFISIIKEVFRIRSPGPLGLPRISIDDTYLSNGMFIPKGTQILLNIFGMGNLLVSEPDQFKPERWINYKNQQQQKQQQQQQQVNNKNSIDSSESSNLEFFDDLEKVSNPFSLGPRNCVGMAIAKSSIYSVCSNILLNFELSSINNQIIDDNEVFGVSINPKEFSIKLTKR.

Residues 1–21 (MNLINLILYFILFWIVFDFIR) traverse the membrane as a helical segment. Cysteine 456 serves as a coordination point for heme.

The protein belongs to the cytochrome P450 family. The cofactor is heme.

The protein localises to the membrane. The chain is Probable cytochrome P450 519B1 (cyp519B1) from Dictyostelium discoideum (Social amoeba).